A 468-amino-acid chain; its full sequence is Factor XIIa inhibitor (468 aa).

The N-terminal stretch at 1-23 (MASRLTPLTLLLLLLLAGDRVTS) is a signal peptide. Residues 27-60 (VGPGNLQEGESEGDSQKGGILDGESIQGNEDSPT) form a disordered region. Residues N65, N176, N227, and N326 are each glycosylated (N-linked (GlcNAc...) asparagine). Intrachain disulfides connect C97–C396 and C104–C179.

This sequence belongs to the serpin family. N- and O-glycosylated.

Its subcellular location is the secreted. May play a potentially crucial role in regulating important physiological pathways including complement activation, blood coagulation, fibrinolysis and the generation of kinins. The sequence is that of Factor XIIa inhibitor from Bos taurus (Bovine).